Consider the following 570-residue polypeptide: Dihydroxy-acid dehydratase (570 aa).

A [2Fe-2S] cluster-binding site is contributed by C61. Position 94 (D94) interacts with Mg(2+). C135 serves as a coordination point for [2Fe-2S] cluster. 2 residues coordinate Mg(2+): D136 and K137. Position 137 is an N6-carboxylysine (K137). C207 is a binding site for [2Fe-2S] cluster. E459 contributes to the Mg(2+) binding site. S485 acts as the Proton acceptor in catalysis.

The protein belongs to the IlvD/Edd family. In terms of assembly, homodimer. [2Fe-2S] cluster serves as cofactor. Requires Mg(2+) as cofactor.

It catalyses the reaction (2R)-2,3-dihydroxy-3-methylbutanoate = 3-methyl-2-oxobutanoate + H2O. It carries out the reaction (2R,3R)-2,3-dihydroxy-3-methylpentanoate = (S)-3-methyl-2-oxopentanoate + H2O. The protein operates within amino-acid biosynthesis; L-isoleucine biosynthesis; L-isoleucine from 2-oxobutanoate: step 3/4. Its pathway is amino-acid biosynthesis; L-valine biosynthesis; L-valine from pyruvate: step 3/4. Its function is as follows. Functions in the biosynthesis of branched-chain amino acids. Catalyzes the dehydration of (2R,3R)-2,3-dihydroxy-3-methylpentanoate (2,3-dihydroxy-3-methylvalerate) into 2-oxo-3-methylpentanoate (2-oxo-3-methylvalerate) and of (2R)-2,3-dihydroxy-3-methylbutanoate (2,3-dihydroxyisovalerate) into 2-oxo-3-methylbutanoate (2-oxoisovalerate), the penultimate precursor to L-isoleucine and L-valine, respectively. The protein is Dihydroxy-acid dehydratase of Lactococcus lactis subsp. cremoris (strain SK11).